The chain runs to 549 residues: Hydroxylamine reductase (549 aa).

4 residues coordinate [4Fe-4S] cluster: cysteine 5, cysteine 8, cysteine 17, and cysteine 23. The hybrid [4Fe-2O-2S] cluster site is built by histidine 242, glutamate 266, cysteine 310, cysteine 402, cysteine 430, cysteine 455, glutamate 490, and lysine 492. Residue cysteine 402 is modified to Cysteine persulfide.

It belongs to the HCP family. Requires [4Fe-4S] cluster as cofactor. Hybrid [4Fe-2O-2S] cluster serves as cofactor.

The protein resides in the cytoplasm. It carries out the reaction A + NH4(+) + H2O = hydroxylamine + AH2 + H(+). Catalyzes the reduction of hydroxylamine to form NH(3) and H(2)O. The protein is Hydroxylamine reductase of Clostridium novyi (strain NT).